We begin with the raw amino-acid sequence, 367 residues long: Leu/Ile/Val-binding protein BraC3 (367 aa).

Residues 1–22 form the signal peptide; sequence MTLKTLTATLVASLAFAPLAHA.

The protein belongs to the leucine-binding protein family. The complex is composed of two ATP-binding proteins (BraF and BraG), two transmembrane proteins (BraD and BraE) and a solute-binding protein (BraC or BraC3).

It localises to the periplasm. Part of the ABC transporter complex BraDEFGC/C3 involved in transport of branched-chain amino acids Leu, Ile and Val (LIV). Essential for the development of bacteroids, the differentiated legume-symbiotic forms of this bacterium, and for the effective N(2) fixation by them. In Rhizobium johnstonii (strain DSM 114642 / LMG 32736 / 3841) (Rhizobium leguminosarum bv. viciae), this protein is Leu/Ile/Val-binding protein BraC3.